Reading from the N-terminus, the 249-residue chain is Phosphate import ATP-binding protein PstB (249 aa).

The ABC transporter domain occupies 4 to 244 (VKIKDLSLFY…PQDKRTEDYI (241 aa)). 36 to 43 (GPSGCGKS) contributes to the ATP binding site.

Belongs to the ABC transporter superfamily. Phosphate importer (TC 3.A.1.7) family. In terms of assembly, the complex is composed of two ATP-binding proteins (PstB), two transmembrane proteins (PstC and PstA) and a solute-binding protein (PstS).

The protein localises to the cell membrane. The catalysed reaction is phosphate(out) + ATP + H2O = ADP + 2 phosphate(in) + H(+). Part of the ABC transporter complex PstSACB involved in phosphate import. Responsible for energy coupling to the transport system. The sequence is that of Phosphate import ATP-binding protein PstB from Clostridium tetani (strain Massachusetts / E88).